Consider the following 453-residue polypeptide: MALPNKFFLWFCCFAWLCFPISLDSLPSRGEAQIVARTALESEAETWSLLNHLGGRHRPGLLSPLLEVLYDGHGEPPRLQPDDRALRYMKRLYKAYATKEGTPKSNRRHLYNTVRLFTPCAQHKQAPGDLAAGTFPSVDLLFNLDRVTVVEHLFKSVLLYTFNNSISFPFPVKCICNLVIKEPEFSSKTLPRAPYSFTYNSQFEFRKKYKWMEIDVTAPLEPLVASHKRNIHMSVNFTCAEDQLQHPSARDSLFNMTLLVAPSLLLYLNDTSAQAFHRWHSLHPKRKPSQGPDQKRGLSAYPVGEEAAEGVRSSRHRRDQESASSELKKPLVPASVNLSEYFKQFLFPQNECELHDFRLSFSQLKWDNWIVAPHKYNPRYCKGDCPRAVGHRYGSPVHTMVQNIIHEKLDSSVPRPSCVPAKYSPLSVLAIEPDGSIAYKEYEDMIATKCTCR.

An N-terminal signal peptide occupies residues 1–27; sequence MALPNKFFLWFCCFAWLCFPISLDSLP. A propeptide spanning residues 28–318 is cleaved from the precursor; sequence SRGEAQIVAR…EGVRSSRHRR (291 aa). Asn-163, Asn-236, Asn-255, and Asn-269 each carry an N-linked (GlcNAc...) asparagine glycan. The tract at residues 304–328 is disordered; sequence GEEAAEGVRSSRHRRDQESASSELK. Basic and acidic residues predominate over residues 318-328; sequence RDQESASSELK. A glycan (N-linked (GlcNAc...) asparagine) is linked at Asn-337. Cystine bridges form between Cys-352–Cys-418, Cys-381–Cys-450, and Cys-385–Cys-452.

This sequence belongs to the TGF-beta family. Homodimer or heterodimer (Potential). But, in contrast to other members of this family, cannot be disulfide-linked. Phosphorylated; phosphorylation is critical for GDF9 function.

The protein resides in the secreted. Required for ovarian folliculogenesis. This is Growth/differentiation factor 9 (GDF9) from Ovis aries (Sheep).